A 386-amino-acid chain; its full sequence is Histidine decarboxylase (386 aa).

H120 is a substrate binding site. K233 carries the post-translational modification N6-(pyridoxal phosphate)lysine.

Belongs to the group II decarboxylase family. Homotetramer. Requires pyridoxal 5'-phosphate as cofactor.

It catalyses the reaction L-histidine + H(+) = histamine + CO2. Its pathway is siderophore biosynthesis; anguibactin biosynthesis. This Vibrio anguillarum (strain ATCC 68554 / 775) (Listonella anguillarum) protein is Histidine decarboxylase.